Here is a 155-residue protein sequence, read N- to C-terminus: Putative pre-16S rRNA nuclease (155 aa).

Belongs to the YqgF nuclease family.

It is found in the cytoplasm. Its function is as follows. Could be a nuclease involved in processing of the 5'-end of pre-16S rRNA. The sequence is that of Putative pre-16S rRNA nuclease from Xylella fastidiosa (strain M12).